A 357-amino-acid chain; its full sequence is Arginine kinase Cal b 2.0101 (357 aa).

One can recognise a Phosphagen kinase N-terminal domain in the interval Lys-9 to Lys-91. Gly-64–Tyr-68 lines the L-arginine pocket. In terms of domain architecture, Phosphagen kinase C-terminal spans Phe-119 to Met-356. ATP-binding positions include Ser-122–Arg-126 and His-185. Residues Cys-201 and Cys-271 are joined by a disulfide bond. Position 225 (Glu-225) interacts with L-arginine. Arg-229 contacts ATP. L-arginine is bound at residue Cys-271. ATP-binding positions include Arg-280–His-284 and Arg-309–Glu-314. Glu-314 serves as a coordination point for L-arginine.

The protein belongs to the ATP:guanido phosphotransferase family. Expressed in chela muscle (at protein level). Expressed in muscle.

It carries out the reaction L-arginine + ATP = N(omega)-phospho-L-arginine + ADP + H(+). Functionally, catalyzes the reversible transfer of high energy ATP gamma-phosphate group to L-arginine. In Callinectes bellicosus (Warrior swimming crab), this protein is Arginine kinase Cal b 2.0101.